Consider the following 489-residue polypeptide: Glutamyl-tRNA(Gln) amidotransferase subunit A (489 aa).

Residues lysine 77 and serine 152 each act as charge relay system in the active site. The active-site Acyl-ester intermediate is serine 176.

It belongs to the amidase family. GatA subfamily. As to quaternary structure, heterotrimer of A, B and C subunits.

It catalyses the reaction L-glutamyl-tRNA(Gln) + L-glutamine + ATP + H2O = L-glutaminyl-tRNA(Gln) + L-glutamate + ADP + phosphate + H(+). In terms of biological role, allows the formation of correctly charged Gln-tRNA(Gln) through the transamidation of misacylated Glu-tRNA(Gln) in organisms which lack glutaminyl-tRNA synthetase. The reaction takes place in the presence of glutamine and ATP through an activated gamma-phospho-Glu-tRNA(Gln). This chain is Glutamyl-tRNA(Gln) amidotransferase subunit A, found in Levilactobacillus brevis (strain ATCC 367 / BCRC 12310 / CIP 105137 / JCM 1170 / LMG 11437 / NCIMB 947 / NCTC 947) (Lactobacillus brevis).